Here is a 170-residue protein sequence, read N- to C-terminus: Ecotin (170 aa).

A signal peptide spans 1–21 (MNKASVVFSGLLMAVSASAIA). A disulfide bridge connects residues Cys78 and Cys115.

The protein belongs to the protease inhibitor I11 (ecotin) family. In terms of assembly, homodimer.

It localises to the periplasm. General inhibitor of pancreatic serine proteases: inhibits chymotrypsin, trypsin, elastases, factor X, kallikrein as well as a variety of other proteases. In Serratia proteamaculans (strain 568), this protein is Ecotin.